The sequence spans 378 residues: 4-hydroxy-3-methylbut-2-en-1-yl diphosphate synthase (flavodoxin) (378 aa).

[4Fe-4S] cluster-binding residues include cysteine 268, cysteine 271, cysteine 303, and glutamate 310.

This sequence belongs to the IspG family. [4Fe-4S] cluster is required as a cofactor.

It catalyses the reaction (2E)-4-hydroxy-3-methylbut-2-enyl diphosphate + oxidized [flavodoxin] + H2O + 2 H(+) = 2-C-methyl-D-erythritol 2,4-cyclic diphosphate + reduced [flavodoxin]. Its pathway is isoprenoid biosynthesis; isopentenyl diphosphate biosynthesis via DXP pathway; isopentenyl diphosphate from 1-deoxy-D-xylulose 5-phosphate: step 5/6. Converts 2C-methyl-D-erythritol 2,4-cyclodiphosphate (ME-2,4cPP) into 1-hydroxy-2-methyl-2-(E)-butenyl 4-diphosphate. The sequence is that of 4-hydroxy-3-methylbut-2-en-1-yl diphosphate synthase (flavodoxin) from Corynebacterium efficiens (strain DSM 44549 / YS-314 / AJ 12310 / JCM 11189 / NBRC 100395).